A 471-amino-acid chain; its full sequence is Glutamate--tRNA ligase (471 aa).

A 'HIGH' region motif is present at residues 9–19 (PSPTGYLHVGG). Zn(2+) is bound by residues cysteine 98, cysteine 100, cysteine 125, and aspartate 127. The 'KMSKS' region signature appears at 237–241 (KLSKR). Lysine 240 is an ATP binding site.

This sequence belongs to the class-I aminoacyl-tRNA synthetase family. Glutamate--tRNA ligase type 1 subfamily. As to quaternary structure, monomer. Zn(2+) serves as cofactor.

It is found in the cytoplasm. The catalysed reaction is tRNA(Glu) + L-glutamate + ATP = L-glutamyl-tRNA(Glu) + AMP + diphosphate. In terms of biological role, catalyzes the attachment of glutamate to tRNA(Glu) in a two-step reaction: glutamate is first activated by ATP to form Glu-AMP and then transferred to the acceptor end of tRNA(Glu). This Yersinia pseudotuberculosis serotype O:1b (strain IP 31758) protein is Glutamate--tRNA ligase.